Reading from the N-terminus, the 248-residue chain is Triosephosphate isomerase (248 aa).

Residue 9–11 (NWK) coordinates substrate. His94 (electrophile) is an active-site residue. Catalysis depends on Glu166, which acts as the Proton acceptor. Residues Gly172, Ser212, and 233–234 (GG) contribute to the substrate site.

Belongs to the triosephosphate isomerase family. As to quaternary structure, homodimer.

The protein resides in the cytoplasm. The enzyme catalyses D-glyceraldehyde 3-phosphate = dihydroxyacetone phosphate. It functions in the pathway carbohydrate biosynthesis; gluconeogenesis. It participates in carbohydrate degradation; glycolysis; D-glyceraldehyde 3-phosphate from glycerone phosphate: step 1/1. Its function is as follows. Involved in the gluconeogenesis. Catalyzes stereospecifically the conversion of dihydroxyacetone phosphate (DHAP) to D-glyceraldehyde-3-phosphate (G3P). The polypeptide is Triosephosphate isomerase (Thermoanaerobacter pseudethanolicus (strain ATCC 33223 / 39E) (Clostridium thermohydrosulfuricum)).